The sequence spans 369 residues: Phenylalanine--tRNA ligase alpha subunit (369 aa).

A Mg(2+)-binding site is contributed by E269.

Belongs to the class-II aminoacyl-tRNA synthetase family. Phe-tRNA synthetase alpha subunit type 1 subfamily. In terms of assembly, tetramer of two alpha and two beta subunits. Mg(2+) is required as a cofactor.

It localises to the cytoplasm. The catalysed reaction is tRNA(Phe) + L-phenylalanine + ATP = L-phenylalanyl-tRNA(Phe) + AMP + diphosphate + H(+). This chain is Phenylalanine--tRNA ligase alpha subunit, found in Nitrobacter winogradskyi (strain ATCC 25391 / DSM 10237 / CIP 104748 / NCIMB 11846 / Nb-255).